We begin with the raw amino-acid sequence, 130 residues long: Large ribosomal subunit protein bL19 (130 aa).

This sequence belongs to the bacterial ribosomal protein bL19 family.

Functionally, this protein is located at the 30S-50S ribosomal subunit interface and may play a role in the structure and function of the aminoacyl-tRNA binding site. In Burkholderia lata (strain ATCC 17760 / DSM 23089 / LMG 22485 / NCIMB 9086 / R18194 / 383), this protein is Large ribosomal subunit protein bL19.